Consider the following 763-residue polypeptide: DEK domain-containing chromatin-associated protein 3 (763 aa).

Disordered regions lie at residues 1-324 (MGED…RERK) and 458-681 (TGDV…SDKV). Residues 11–20 (PTANKTTSLE) show a composition bias toward polar residues. Basic and acidic residues-rich tracts occupy residues 32 to 44 (AGGKETQELAKDE), 72 to 97 (SEVKKNEDNAETQKMEEKVEVTKDEG), 124 to 172 (TVMK…KANG), and 180 to 242 (DIKE…KVED). Positions 60-96 (KDDEKAETEDKESEVKKNEDNAETQKMEEKVEVTKDE) form a coiled coil. The stretch at 214–286 (GKEKEDKEEN…KEESKGSKKR (73 aa)) forms a coiled coil. Residues 243-252 (EKEGSEDEND) show a composition bias toward acidic residues. Residues 253-264 (NEKVESKDAKED) show a composition bias toward basic and acidic residues. Positions 265-277 (EKEETNDDKEDEK) are enriched in acidic residues. Positions 284-291 (KKRGKGTS) match the Nuclear localization signal 1 motif. Residues 295-311 (KVREKNKTEEVKKDAEP) are compositionally biased toward basic and acidic residues. The span at 475 to 484 (KGAKRKRTPK) shows a compositional bias: basic residues. The Nuclear localization signal 2 signature appears at 483 to 490 (PKKTSPTA). Over residues 485 to 496 (KTSPTAGSSSSK) the composition is skewed to low complexity. The stretch at 513-551 (KKSLAHSDDESEEEKEEEEKQEEEKAEEKEEKKEEENEN) forms a coiled coil. Residues 521 to 533 (DESEEEKEEEEKQ) are compositionally biased toward acidic residues. The span at 534-547 (EEEKAEEKEEKKEE) shows a compositional bias: basic and acidic residues. The segment covering 557–578 (SEDEAPQPSESEEKDESEEHSE) has biased composition (acidic residues). 2 stretches are compositionally biased toward low complexity: residues 606–615 (AVVAAKSSPP) and 650–660 (PIKASPAPSKS). Basic and acidic residues predominate over residues 661–681 (ASKEKPVKRAGKGKDKPSDKV). The DEK-C domain occupies 676-731 (KPSDKVLKNAIVEILKRVDFSTATFTDILKELAKEFTEDLTPRKSSIKMIIQEELT). 2 DNA-binding regions span residues 694 to 708 (DFSTATFTDILKELA) and 723 to 727 (KMIIQ). A coiled-coil region spans residues 723 to 753 (KMIIQEELTKLADEEEEEEKKEEDSEKEEAG). Residues 730 to 763 (LTKLADEEEEEEKKEEDSEKEEAGGSGGGEEVKA) form a disordered region. Residues 753 to 763 (GGSGGGEEVKA) show a composition bias toward gly residues.

As to quaternary structure, found in a mRNA splicing-dependent exon junction complex (EJC). Binds specifically histones H3 and H4. Interacts with TOP1A, SCC3, At1g61730, At1g20940, At1g13930, DEK4, HDT1, NIT1, SHL, CYP19-1, GEBPL, HSP70-3, PDP2, PDP3, KIN2, RPL11A and PDS5A. As to expression, highly expressed in young seedlings.

The protein localises to the nucleus. It localises to the nucleolus. Functionally, chromatin-associated protein which contributes to the modulation of chromatin structure (such as super-helical structure of DNA) and function. Binds to chromatin of protein-coding genes throughout the genome to regulate nucleosome occupancy and chromatin accessibility, and to modulate the expression of target genes. Negative regulator of stress tolerance (e.g. high salt). The protein is DEK domain-containing chromatin-associated protein 3 of Arabidopsis thaliana (Mouse-ear cress).